The chain runs to 302 residues: tRNA pseudouridine synthase B (302 aa).

Residue His40 participates in substrate binding. The Nucleophile role is filled by Asp45. Tyr73, Tyr178, and Leu199 together coordinate substrate.

Belongs to the pseudouridine synthase TruB family. Type 1 subfamily.

It carries out the reaction uridine(55) in tRNA = pseudouridine(55) in tRNA. Its function is as follows. Responsible for synthesis of pseudouridine from uracil-55 in the psi GC loop of transfer RNAs. In Buchnera aphidicola subsp. Baizongia pistaciae (strain Bp), this protein is tRNA pseudouridine synthase B.